Here is a 168-residue protein sequence, read N- to C-terminus: Photosystem I assembly protein Ycf3 (168 aa).

TPR repeat units follow at residues 35-68 (AFTY…EIDP), 72-105 (SYIL…NPFL), and 120-153 (GEQA…TPGN).

Belongs to the Ycf3 family.

The protein localises to the plastid. The protein resides in the chloroplast thylakoid membrane. In terms of biological role, essential for the assembly of the photosystem I (PSI) complex. May act as a chaperone-like factor to guide the assembly of the PSI subunits. The protein is Photosystem I assembly protein Ycf3 of Ranunculus macranthus (Large buttercup).